We begin with the raw amino-acid sequence, 256 residues long: Major prion protein (256 aa).

Positions 1–24 are cleaved as a signal peptide; the sequence is MVKSHIGSWILVLFVAMWSDVGLC. The interaction with GRB2, ERI3 and SYN1 stretch occupies residues 25-233; it reads KKRPKPGGGW…ESQAYYQRGA (209 aa). The disordered stretch occupies residues 28-110; sequence PKPGGGWNTG…QWNKPSKPKT (83 aa). 5 repeat units span residues 54–62, 63–70, 71–78, 79–86, and 87–95. The 5 X 8 AA tandem repeats of P-H-G-G-G-W-G-Q stretch occupies residues 54-95; the sequence is PQGGGGWGQPHGGGWGQPHGGGWGQPHGGGWGQPHGGGGWGQ. Residues 55–97 show a composition bias toward gly residues; the sequence is QGGGGWGQPHGGGWGQPHGGGWGQPHGGGWGQPHGGGGWGQGG. Positions 64, 65, 66, 72, 73, 74, 80, 81, 82, 88, 90, and 91 each coordinate Cu(2+). Cysteine 182 and cysteine 217 form a disulfide bridge. Asparagine 184 and asparagine 200 each carry an N-linked (GlcNAc...) asparagine glycan. Residue alanine 233 is the site of GPI-anchor amidated alanine attachment. Positions 234–256 are cleaved as a propeptide — removed in mature form; that stretch reads SVILFSSPPVILLISFLIFLIVG.

The protein belongs to the prion family. Monomer and homodimer. Has a tendency to aggregate into amyloid fibrils containing a cross-beta spine, formed by a steric zipper of superposed beta-strands. Soluble oligomers may represent an intermediate stage on the path to fibril formation. Copper binding may promote oligomerization. Interacts with GRB2, APP, ERI3/PRNPIP and SYN1. Mislocalized cytosolically exposed PrP interacts with MGRN1; this interaction alters MGRN1 subcellular location and causes lysosomal enlargement. Interacts with KIAA1191.

Its subcellular location is the cell membrane. It is found in the golgi apparatus. Its function is as follows. Its primary physiological function is unclear. Has cytoprotective activity against internal or environmental stresses. May play a role in neuronal development and synaptic plasticity. May be required for neuronal myelin sheath maintenance. May play a role in iron uptake and iron homeostasis. Soluble oligomers are toxic to cultured neuroblastoma cells and induce apoptosis (in vitro). Association with GPC1 (via its heparan sulfate chains) targets PRNP to lipid rafts. Also provides Cu(2+) or Zn(2+) for the ascorbate-mediated GPC1 deaminase degradation of its heparan sulfate side chains. This Budorcas taxicolor (Golden takin) protein is Major prion protein (PRNP).